A 351-amino-acid polypeptide reads, in one-letter code: Meiotically up-regulated gene 1 protein (351 aa).

The protein resides in the cytoplasm. Required for correct meiotic chromosome segregation. The polypeptide is Meiotically up-regulated gene 1 protein (mug1) (Schizosaccharomyces pombe (strain 972 / ATCC 24843) (Fission yeast)).